The chain runs to 115 residues: Large ribosomal subunit protein bL19 (115 aa).

Belongs to the bacterial ribosomal protein bL19 family.

In terms of biological role, this protein is located at the 30S-50S ribosomal subunit interface and may play a role in the structure and function of the aminoacyl-tRNA binding site. This is Large ribosomal subunit protein bL19 from Yersinia pseudotuberculosis serotype O:1b (strain IP 31758).